The primary structure comprises 195 residues: dTTP/UTP pyrophosphatase (195 aa).

The active-site Proton acceptor is D70.

Belongs to the Maf family. YhdE subfamily. The cofactor is a divalent metal cation.

It is found in the cytoplasm. It catalyses the reaction dTTP + H2O = dTMP + diphosphate + H(+). The catalysed reaction is UTP + H2O = UMP + diphosphate + H(+). Functionally, nucleoside triphosphate pyrophosphatase that hydrolyzes dTTP and UTP. May have a dual role in cell division arrest and in preventing the incorporation of modified nucleotides into cellular nucleic acids. This is dTTP/UTP pyrophosphatase from Photorhabdus laumondii subsp. laumondii (strain DSM 15139 / CIP 105565 / TT01) (Photorhabdus luminescens subsp. laumondii).